The primary structure comprises 327 residues: GTPase Obg (327 aa).

The 159-residue stretch at 2 to 160 folds into the Obg domain; sequence HTFKDSLNIT…LDLRLELVLI (159 aa). Residues 161-326 form the OBG-type G domain; it reads ADIGLVGLPN…LVNELFALSR (166 aa). GTP-binding positions include 167 to 174, 192 to 196, 213 to 216, 280 to 283, and 307 to 309; these read GLPNAGKS, FTTKV, DVPG, NKLD, and SIY. Mg(2+) contacts are provided by serine 174 and threonine 194.

This sequence belongs to the TRAFAC class OBG-HflX-like GTPase superfamily. OBG GTPase family. Monomer. Requires Mg(2+) as cofactor.

The protein resides in the cytoplasm. Its function is as follows. An essential GTPase which binds GTP, GDP and possibly (p)ppGpp with moderate affinity, with high nucleotide exchange rates and a fairly low GTP hydrolysis rate. Plays a role in control of the cell cycle, stress response, ribosome biogenesis and in those bacteria that undergo differentiation, in morphogenesis control. The protein is GTPase Obg of Borrelia turicatae (strain 91E135).